The following is a 795-amino-acid chain: Protein translocase subunit SecA 2 (795 aa).

ATP-binding positions include Gln84, 102–106 (GEGKT), and Asp496.

The protein belongs to the SecA family. In terms of assembly, monomer and homodimer. Part of the essential Sec protein translocation apparatus which comprises SecA, SecYEG and auxiliary proteins SecDF. Other proteins may also be involved.

The protein resides in the cell membrane. It is found in the cytoplasm. It catalyses the reaction ATP + H2O + cellular proteinSide 1 = ADP + phosphate + cellular proteinSide 2.. Functionally, part of the Sec protein translocase complex. Interacts with the SecYEG preprotein conducting channel. Has a central role in coupling the hydrolysis of ATP to the transfer of proteins into and across the cell membrane, serving as an ATP-driven molecular motor driving the stepwise translocation of polypeptide chains across the membrane. The chain is Protein translocase subunit SecA 2 from Streptococcus agalactiae serotype V (strain ATCC BAA-611 / 2603 V/R).